The following is a 429-amino-acid chain: Glutamate-1-semialdehyde 2,1-aminomutase 2 (429 aa).

An N6-(pyridoxal phosphate)lysine modification is found at Lys268.

Belongs to the class-III pyridoxal-phosphate-dependent aminotransferase family. HemL subfamily. Homodimer. Pyridoxal 5'-phosphate is required as a cofactor.

It localises to the cytoplasm. It carries out the reaction (S)-4-amino-5-oxopentanoate = 5-aminolevulinate. It functions in the pathway porphyrin-containing compound metabolism; protoporphyrin-IX biosynthesis; 5-aminolevulinate from L-glutamyl-tRNA(Glu): step 2/2. The chain is Glutamate-1-semialdehyde 2,1-aminomutase 2 from Bacillus mycoides (strain KBAB4) (Bacillus weihenstephanensis).